The chain runs to 693 residues: FAST kinase domain-containing protein 2, mitochondrial (693 aa).

Phosphoserine is present on residues Ser-110 and Ser-124. Positions 618-675 constitute an RAP domain; the sequence is VAVLCVSRSAYCLGSSHPRGFLAMKMRHLNAMGFRVILVNNWEMDKLEMEDAVTFLKT. Ser-692 is modified (phosphoserine).

This sequence belongs to the FAST kinase family. As to quaternary structure, monomer. Found in a complex with GRSF1, DDX28, DHX30 and FASTKD5. Associates with the 16S mitochondrial rRNA (16S mt-rRNA). Forms a regulatory protein-RNA complex, consisting of RCC1L, NGRN, RPUSD3, RPUSD4, TRUB2, FASTKD2 and 16S mt-rRNA.

The protein resides in the mitochondrion matrix. It localises to the mitochondrion nucleoid. Plays an important role in assembly of the mitochondrial large ribosomal subunit. As a component of a functional protein-RNA module, consisting of RCC1L, NGRN, RPUSD3, RPUSD4, TRUB2, FASTKD2 and 16S mitochondrial ribosomal RNA (16S mt-rRNA), controls 16S mt-rRNA abundance and is required for intra-mitochondrial translation. May play a role in mitochondrial apoptosis. This chain is FAST kinase domain-containing protein 2, mitochondrial (FASTKD2), found in Pongo abelii (Sumatran orangutan).